A 226-amino-acid polypeptide reads, in one-letter code: Fibrillarin-like rRNA/tRNA 2'-O-methyltransferase (226 aa).

S-adenosyl-L-methionine contacts are provided by residues 85-86 (TT), 104-105 (EF), 129-130 (DA), and 149-152 (DVAQ).

Belongs to the methyltransferase superfamily. Fibrillarin family. As to quaternary structure, interacts with nop5. Component of box C/D small ribonucleoprotein (sRNP) particles that contain rpl7ae, FlpA and nop5, plus a guide RNA.

Involved in pre-rRNA and tRNA processing. Utilizes the methyl donor S-adenosyl-L-methionine to catalyze the site-specific 2'-hydroxyl methylation of ribose moieties in rRNA and tRNA. Site specificity is provided by a guide RNA that base pairs with the substrate. Methylation occurs at a characteristic distance from the sequence involved in base pairing with the guide RNA. This chain is Fibrillarin-like rRNA/tRNA 2'-O-methyltransferase, found in Thermococcus onnurineus (strain NA1).